We begin with the raw amino-acid sequence, 456 residues long: Major facilitator superfamily domain-containing protein 10 (456 aa).

A run of 11 helical transmembrane segments spans residues 25–45, 87–107, 125–145, 149–169, 179–199, 204–224, 278–298, 311–328, 343–363, 365–385, and 422–442; these read VVAV…LLLP, VLFG…SAPL, LAGV…AAFL, VIGG…ADLG, AVIG…GAFL, VPWL…CFLP, LVYF…SFLV, KMFF…GAYA, AILL…LPIL, LGLL…SSVV, and LAGA…PFSI.

This sequence belongs to the major facilitator superfamily.

The protein resides in the nucleus inner membrane. The protein localises to the cell membrane. Probable organic anion transporter which may serve as a transporter for some non-steroidal anti-inflammatory drugs (NSAIDs) as well as other organic anions across the luminal membranes of renal proximal tubules at the final excretion step into the urine. In Bos taurus (Bovine), this protein is Major facilitator superfamily domain-containing protein 10 (MFSD10).